The sequence spans 429 residues: MLTTLNKALDTIHRLAAETVWSEGVTPMKIGDSGEFGFWPKGFSVGATAGNIRYSGRDDMMLIVSDSPASAAALFTTNLCCAAPVVLSRNHLQQSAASMRAIVCNSGNANAATGKQGMADAQAMADAVAEQLSIKPEEVLVASTGVIGQLLPMERVHAGIVALPATLQSNSVLGAVSAIMTTDTFPKFYAVDVALSSGTVRLCGIAKGSGMICPNMATMLGFLATDAAIAPELLQTLLSEANRKSFNAITVDGDTSTNDMVAMLASGAGAEVVAGSKDEALFSAALQSLMILLAKLIVIDGEGATKLVEITVKGAVSNEEAELAARTIANSSLVKTAIHGEDANWGRIIAAAGRSGARFNEDELELWFNEMPILKKGLIADFSEDEAAIILAQPSYSITLSLGNGSGSATLWSCDLSKEYVEINGSYRS.

Residues Thr181, Lys207, Thr218, Glu302, Asn424, and Ser429 each contribute to the substrate site. Residue Thr218 is the Nucleophile of the active site.

Belongs to the ArgJ family. As to quaternary structure, heterotetramer of two alpha and two beta chains.

Its subcellular location is the cytoplasm. The enzyme catalyses N(2)-acetyl-L-ornithine + L-glutamate = N-acetyl-L-glutamate + L-ornithine. It catalyses the reaction L-glutamate + acetyl-CoA = N-acetyl-L-glutamate + CoA + H(+). It participates in amino-acid biosynthesis; L-arginine biosynthesis; L-ornithine and N-acetyl-L-glutamate from L-glutamate and N(2)-acetyl-L-ornithine (cyclic): step 1/1. Its pathway is amino-acid biosynthesis; L-arginine biosynthesis; N(2)-acetyl-L-ornithine from L-glutamate: step 1/4. Functionally, catalyzes two activities which are involved in the cyclic version of arginine biosynthesis: the synthesis of N-acetylglutamate from glutamate and acetyl-CoA as the acetyl donor, and of ornithine by transacetylation between N(2)-acetylornithine and glutamate. The sequence is that of Arginine biosynthesis bifunctional protein ArgJ from Chlorobium chlorochromatii (strain CaD3).